The primary structure comprises 89 residues: Small ribosomal subunit protein uS15 (89 aa).

Belongs to the universal ribosomal protein uS15 family. In terms of assembly, part of the 30S ribosomal subunit. Forms a bridge to the 50S subunit in the 70S ribosome, contacting the 23S rRNA.

Its function is as follows. One of the primary rRNA binding proteins, it binds directly to 16S rRNA where it helps nucleate assembly of the platform of the 30S subunit by binding and bridging several RNA helices of the 16S rRNA. Functionally, forms an intersubunit bridge (bridge B4) with the 23S rRNA of the 50S subunit in the ribosome. This is Small ribosomal subunit protein uS15 from Chloroherpeton thalassium (strain ATCC 35110 / GB-78).